We begin with the raw amino-acid sequence, 90 residues long: Sec-independent protein translocase protein TatAo (90 aa).

Residues 8–28 form a helical membrane-spanning segment; that stretch reads FPGLPGGPELLIVLLIVVLLF. A disordered region spans residues 39 to 90; sequence SSGQAMGEFRRGREEIEEELKKGAEGGDDEGENGDEAEADDADATETEAESR. The span at 46–63 shows a compositional bias: basic and acidic residues; it reads EFRRGREEIEEELKKGAE. A compositionally biased stretch (acidic residues) spans 64–90; the sequence is GGDDEGENGDEAEADDADATETEAESR.

This sequence belongs to the TatA/E family. As to quaternary structure, forms a complex with TatC. Cytoplasmic and membrane-bound TatA form high-molecular-weight complexes.

The protein localises to the cell membrane. It is found in the cytoplasm. In terms of biological role, part of the twin-arginine translocation (Tat) system that transports large folded proteins containing a characteristic twin-arginine motif in their signal peptide across membranes. TatA could form the protein-conducting channel of the Tat system. This Haloferax volcanii (strain ATCC 29605 / DSM 3757 / JCM 8879 / NBRC 14742 / NCIMB 2012 / VKM B-1768 / DS2) (Halobacterium volcanii) protein is Sec-independent protein translocase protein TatAo.